The following is a 441-amino-acid chain: MSETIYALASAAGRAGIAVWRLSGEGSGTALSALTGKPLPEPRRARRVRLRDGAGEVLDDGLVLWFPAPHSFTGEDVAELHLHGGRAVAAALTARLGELGLRPAEPGEFSRRAFLNGKLDLTRAEAIADLVDAETAAQRRQALRQLDGGLAGLVEGWRSALVRAMAHLEAVIDFADEDIPDTLLEQSVGEVRSLRREMEVHLDERRNGERLRDGIHITILGAPNAGKSSLLNRLAGREAAIVSAQAGTTRDVIEVHLDLGGWPVIVADTAGLRDSACEIESEGVRRAADRAAKADLRLCVFDGTLYPNLDAATLEMIDDATLVVLNKRDLMTGETPASINGRPVLTLSAKAGEGVDDLVAELARVVESRFAMGSAPVLTRERHRVAVAEAVAALSRFDPGLGIEMAAEDLRLAARSLGRITGRVDVEEILDVIFHEFCIGK.

(6S)-5-formyl-5,6,7,8-tetrahydrofolate is bound by residues arginine 21, glutamate 79, and lysine 118. A TrmE-type G domain is found at 214-367; the sequence is GIHITILGAP…LVAELARVVE (154 aa). Residues 224–229, 243–249, and 268–271 contribute to the GTP site; these read NAGKSS, SAQAGTT, and DTAG. 2 residues coordinate Mg(2+): serine 228 and threonine 249. Lysine 441 serves as a coordination point for (6S)-5-formyl-5,6,7,8-tetrahydrofolate.

Belongs to the TRAFAC class TrmE-Era-EngA-EngB-Septin-like GTPase superfamily. TrmE GTPase family. As to quaternary structure, homodimer. Heterotetramer of two MnmE and two MnmG subunits. It depends on K(+) as a cofactor.

The protein localises to the cytoplasm. Its function is as follows. Exhibits a very high intrinsic GTPase hydrolysis rate. Involved in the addition of a carboxymethylaminomethyl (cmnm) group at the wobble position (U34) of certain tRNAs, forming tRNA-cmnm(5)s(2)U34. This Paramagnetospirillum magneticum (strain ATCC 700264 / AMB-1) (Magnetospirillum magneticum) protein is tRNA modification GTPase MnmE.